A 686-amino-acid chain; its full sequence is Methionine--tRNA ligase (686 aa).

Residues 15–25 (PYTNGPIHIGH) carry the 'HIGH' region motif. The Zn(2+) site is built by Cys-147, Cys-150, Cys-160, and Cys-163. Residues 336-340 (KLSTS) carry the 'KMSKS' region motif. Thr-339 lines the ATP pocket. The tRNA-binding domain maps to 584–686 (DFAKMDLRVG…AGVGNGEGIN (103 aa)).

This sequence belongs to the class-I aminoacyl-tRNA synthetase family. MetG type 1 subfamily. Homodimer. It depends on Zn(2+) as a cofactor.

It localises to the cytoplasm. It carries out the reaction tRNA(Met) + L-methionine + ATP = L-methionyl-tRNA(Met) + AMP + diphosphate. Its function is as follows. Is required not only for elongation of protein synthesis but also for the initiation of all mRNA translation through initiator tRNA(fMet) aminoacylation. The protein is Methionine--tRNA ligase of Flavobacterium psychrophilum (strain ATCC 49511 / DSM 21280 / CIP 103535 / JIP02/86).